Consider the following 387-residue polypeptide: Ferrochelatase (387 aa).

Histidine 196 and glutamate 277 together coordinate Fe cation.

This sequence belongs to the ferrochelatase family.

The protein resides in the cytoplasm. The enzyme catalyses heme b + 2 H(+) = protoporphyrin IX + Fe(2+). It participates in porphyrin-containing compound metabolism; protoheme biosynthesis; protoheme from protoporphyrin-IX: step 1/1. Catalyzes the ferrous insertion into protoporphyrin IX. The polypeptide is Ferrochelatase (Cyanothece sp. (strain PCC 7425 / ATCC 29141)).